The chain runs to 330 residues: Zinc finger Ran-binding domain-containing protein 2 (330 aa).

A Phosphoserine modification is found at serine 9. The segment at 9–40 (SDGDWICPDKKCGNVNFARRTSCNRCGREKTT) adopts a RanBP2-type 1 zinc-finger fold. N6-acetyllysine is present on residues lysine 18, lysine 54, and lysine 92. A RanBP2-type 2 zinc finger spans residues 65–94 (SANDWQCKTCSNVNWARRSECNMCNTPKYA). The segment at 117–330 (REESDGEYDE…SGSRSSSKKK (214 aa)) is disordered. A phosphoserine mark is found at serine 120, serine 153, serine 181, serine 188, and serine 193. Positions 150-163 (DKESEGEEEDEDED) are enriched in acidic residues. Residues 151–324 (KESEGEEEDE…SSGSTHSGSR (174 aa)) form a required for nuclear targeting region. Basic residues predominate over residues 196-210 (KKSNRRSRSKSRSSH). Low complexity-rich tracts occupy residues 211–224 (SRSSSRSSSPSSSR) and 232–242 (RSSSSSQSRSH). Composition is skewed to basic residues over residues 251 to 273 (SRGSKSRSSSRSHRGSSSPRKRS) and 297 to 314 (VRKKRRTRSRSPERHHRS). Positions 315–330 (SSGSTHSGSRSSSKKK) are enriched in low complexity.

The protein belongs to the ZRANB2 family. As to quaternary structure, interacts with the C-terminal half of SNRNP70, the Arg/Ser-rich domain of AKAP17A as well as with U2AF1 and CLK1.

It is found in the nucleus. Splice factor required for alternative splicing of TRA2B/SFRS10 transcripts. Binds to ssRNA containing the consensus sequence 5'-AGGUAA-3'. May interfere with constitutive 5'-splice site selection. The protein is Zinc finger Ran-binding domain-containing protein 2 (Zranb2) of Mus musculus (Mouse).